The primary structure comprises 199 residues: ATP-dependent Clp protease proteolytic subunit (199 aa).

The active-site Nucleophile is Ser97. His122 is an active-site residue.

It belongs to the peptidase S14 family. Fourteen ClpP subunits assemble into 2 heptameric rings which stack back to back to give a disk-like structure with a central cavity, resembling the structure of eukaryotic proteasomes.

The protein resides in the cytoplasm. It catalyses the reaction Hydrolysis of proteins to small peptides in the presence of ATP and magnesium. alpha-casein is the usual test substrate. In the absence of ATP, only oligopeptides shorter than five residues are hydrolyzed (such as succinyl-Leu-Tyr-|-NHMec, and Leu-Tyr-Leu-|-Tyr-Trp, in which cleavage of the -Tyr-|-Leu- and -Tyr-|-Trp bonds also occurs).. In terms of biological role, cleaves peptides in various proteins in a process that requires ATP hydrolysis. Has a chymotrypsin-like activity. Plays a major role in the degradation of misfolded proteins. The chain is ATP-dependent Clp protease proteolytic subunit from Citrifermentans bemidjiense (strain ATCC BAA-1014 / DSM 16622 / JCM 12645 / Bem) (Geobacter bemidjiensis).